The primary structure comprises 389 residues: Cytochrome oxidase assembly protein SHY1 (389 aa).

The Mitochondrial matrix segment spans residues 1–71; sequence MSLLGARSTY…SRRERSFGKK (71 aa). Residues 72–92 traverse the membrane as a helical segment; sequence IVLGLMFAMPIISFYLGTWQV. The Mitochondrial intermembrane segment spans residues 93–341; it reads RRLKWKTKLI…KPTIDLKNNH (249 aa). Positions 292 to 311 are disordered; the sequence is GTQAVDNNTSKPRSRQEMPT. A helical membrane pass occupies residues 342–362; sequence LQYLVTWYGLSFLSTIFLIVA. Topologically, residues 363–389 are mitochondrial matrix; it reads LRKAKRGGVVSQDQLMKEKLKHSRKYM.

It belongs to the SURF1 family. Interacts with COA1, COX14 and MSS51.

The protein resides in the mitochondrion inner membrane. Required for efficient assembly of cytochrome c oxidase in the mitochondrial inner membrane. Involved in a step that couples MSS51-COX14-dependent regulation of COX1 translation to early steps of cytochrome c oxidase assembly. The sequence is that of Cytochrome oxidase assembly protein SHY1 (SHY1) from Saccharomyces cerevisiae (strain ATCC 204508 / S288c) (Baker's yeast).